The sequence spans 407 residues: Fructose-1,6-bisphosphatase, chloroplastic (407 aa).

The transit peptide at 1 to 50 directs the protein to the chloroplast; the sequence is MAAATASSQLIFSKPYSPSRLCPFQLCVFDAKSVLSSSRRKHVNGSGVRC. Residues Glu-126, Glu-155, Asp-176, Leu-178, and Asp-179 each contribute to the Mg(2+) site. Residue 179 to 182 participates in substrate binding; it reads DGSS. The cysteines at positions 203 and 223 are disulfide-linked. Substrate contacts are provided by Asn-287, Tyr-319, Tyr-337, Tyr-339, and Lys-349. Glu-355 is a Mg(2+) binding site.

This sequence belongs to the FBPase class 1 family. In terms of assembly, homotetramer. The cofactor is Mg(2+).

The protein localises to the plastid. It localises to the chloroplast stroma. The enzyme catalyses beta-D-fructose 1,6-bisphosphate + H2O = beta-D-fructose 6-phosphate + phosphate. Its pathway is carbohydrate biosynthesis; Calvin cycle. The protein is Fructose-1,6-bisphosphatase, chloroplastic (FBP) of Pisum sativum (Garden pea).